The sequence spans 73 residues: Protein SlyX homolog (73 aa).

Belongs to the SlyX family.

This Actinobacillus pleuropneumoniae serotype 5b (strain L20) protein is Protein SlyX homolog.